Reading from the N-terminus, the 391-residue chain is Formate-dependent phosphoribosylglycinamide formyltransferase (391 aa).

Residues 20–21 (EL) and glutamate 80 contribute to the N(1)-(5-phospho-beta-D-ribosyl)glycinamide site. Residues arginine 112, lysine 153, 158–163 (SSGKGQ), 193–196 (EGFV), and glutamate 201 each bind ATP. An ATP-grasp domain is found at 117–306 (RLAAEELGLP…EFALHVRAFT (190 aa)). Residues glutamate 265 and glutamate 277 each coordinate Mg(2+). N(1)-(5-phospho-beta-D-ribosyl)glycinamide-binding positions include aspartate 284, lysine 354, and 361–362 (RR).

This sequence belongs to the PurK/PurT family. As to quaternary structure, homodimer.

The catalysed reaction is N(1)-(5-phospho-beta-D-ribosyl)glycinamide + formate + ATP = N(2)-formyl-N(1)-(5-phospho-beta-D-ribosyl)glycinamide + ADP + phosphate + H(+). The protein operates within purine metabolism; IMP biosynthesis via de novo pathway; N(2)-formyl-N(1)-(5-phospho-D-ribosyl)glycinamide from N(1)-(5-phospho-D-ribosyl)glycinamide (formate route): step 1/1. In terms of biological role, involved in the de novo purine biosynthesis. Catalyzes the transfer of formate to 5-phospho-ribosyl-glycinamide (GAR), producing 5-phospho-ribosyl-N-formylglycinamide (FGAR). Formate is provided by PurU via hydrolysis of 10-formyl-tetrahydrofolate. This is Formate-dependent phosphoribosylglycinamide formyltransferase from Vibrio cholerae serotype O1 (strain ATCC 39315 / El Tor Inaba N16961).